A 181-amino-acid polypeptide reads, in one-letter code: Adenylate kinase (181 aa).

10-15 provides a ligand contact to ATP; sequence GAGKGT. Residues 30-59 are NMP; that stretch reads STGDLFRANISQQTPLGREAQKYMDAGDLV. Residues Thr31, Arg36, 57–59, 85–88, and Gln92 each bind AMP; these read DLV and GYPR. An LID region spans residues 126-132; it reads ARGRNDD. Residue Arg127 participates in ATP binding. Residues Arg129 and Arg140 each coordinate AMP. Gly166 serves as a coordination point for ATP.

The protein belongs to the adenylate kinase family. In terms of assembly, monomer.

It is found in the cytoplasm. It catalyses the reaction AMP + ATP = 2 ADP. It functions in the pathway purine metabolism; AMP biosynthesis via salvage pathway; AMP from ADP: step 1/1. In terms of biological role, catalyzes the reversible transfer of the terminal phosphate group between ATP and AMP. Plays an important role in cellular energy homeostasis and in adenine nucleotide metabolism. This is Adenylate kinase from Nocardia farcinica (strain IFM 10152).